The primary structure comprises 83 residues: MNIIPRTSLIIYLKHMKHERQIRKYGHIVHSNRQRKYVVMYINEADADNIVHKLMQLKYVHDIQGSPYKYLKKTYEKEKHEIQ.

The protein belongs to the UPF0298 family.

The protein localises to the cytoplasm. This chain is UPF0298 protein SERP0712, found in Staphylococcus epidermidis (strain ATCC 35984 / DSM 28319 / BCRC 17069 / CCUG 31568 / BM 3577 / RP62A).